The following is a 356-amino-acid chain: Dihydroorotate dehydrogenase (quinone) (356 aa).

FMN contacts are provided by residues 66-70 and T90; that span reads AGFDK. A substrate-binding site is contributed by K70. 115 to 119 contacts substrate; that stretch reads NRMGF. Residues N143 and N176 each coordinate FMN. N176 is a substrate binding site. The active-site Nucleophile is the S179. Residue N181 participates in substrate binding. Positions 212 and 240 each coordinate FMN. 241–242 is a substrate binding site; the sequence is NT. Residues G264, G293, and 314 to 315 each bind FMN; that span reads YT.

The protein belongs to the dihydroorotate dehydrogenase family. Type 2 subfamily. As to quaternary structure, monomer. Requires FMN as cofactor.

The protein resides in the cell membrane. The enzyme catalyses (S)-dihydroorotate + a quinone = orotate + a quinol. Its pathway is pyrimidine metabolism; UMP biosynthesis via de novo pathway; orotate from (S)-dihydroorotate (quinone route): step 1/1. Functionally, catalyzes the conversion of dihydroorotate to orotate with quinone as electron acceptor. The protein is Dihydroorotate dehydrogenase (quinone) (pyrD) of Mycobacterium leprae (strain TN).